A 647-amino-acid polypeptide reads, in one-letter code: DNA mismatch repair protein MutL (647 aa).

Disordered stretches follow at residues 356–391 and 407–428; these read EGSQ…SSIS and PRPQ…EALP. A compositionally biased stretch (polar residues) spans 413–423; that stretch reads LRPQYQGSVTS.

It belongs to the DNA mismatch repair MutL/HexB family.

Its function is as follows. This protein is involved in the repair of mismatches in DNA. It is required for dam-dependent methyl-directed DNA mismatch repair. May act as a 'molecular matchmaker', a protein that promotes the formation of a stable complex between two or more DNA-binding proteins in an ATP-dependent manner without itself being part of a final effector complex. The polypeptide is DNA mismatch repair protein MutL (Citrifermentans bemidjiense (strain ATCC BAA-1014 / DSM 16622 / JCM 12645 / Bem) (Geobacter bemidjiensis)).